A 1073-amino-acid chain; its full sequence is DNA-directed RNA polymerase subunit beta (1073 aa).

It belongs to the RNA polymerase beta chain family. As to quaternary structure, in plastids the minimal PEP RNA polymerase catalytic core is composed of four subunits: alpha, beta, beta', and beta''. When a (nuclear-encoded) sigma factor is associated with the core the holoenzyme is formed, which can initiate transcription.

It localises to the plastid. Its subcellular location is the chloroplast. It catalyses the reaction RNA(n) + a ribonucleoside 5'-triphosphate = RNA(n+1) + diphosphate. Its function is as follows. DNA-dependent RNA polymerase catalyzes the transcription of DNA into RNA using the four ribonucleoside triphosphates as substrates. This Aethionema grandiflorum (Persian stone-cress) protein is DNA-directed RNA polymerase subunit beta.